We begin with the raw amino-acid sequence, 205 residues long: Holliday junction branch migration complex subunit RuvA (205 aa).

The tract at residues 1-64 (MIGRLRGVLI…EDAQLLYGFI (64 aa)) is domain I. The interval 65–143 (TKQERSLFRL…SLMEASVGSE (79 aa)) is domain II. The flexible linker stretch occupies residues 144–156 (REFVLQSNYSPAP). Positions 157–205 (TVNSAEEDAISALISLGYKPPQASKAVSAAYKEGMDSETLIKAALKSML) are domain III.

The protein belongs to the RuvA family. Homotetramer. Forms an RuvA(8)-RuvB(12)-Holliday junction (HJ) complex. HJ DNA is sandwiched between 2 RuvA tetramers; dsDNA enters through RuvA and exits via RuvB. An RuvB hexamer assembles on each DNA strand where it exits the tetramer. Each RuvB hexamer is contacted by two RuvA subunits (via domain III) on 2 adjacent RuvB subunits; this complex drives branch migration. In the full resolvosome a probable DNA-RuvA(4)-RuvB(12)-RuvC(2) complex forms which resolves the HJ.

The protein resides in the cytoplasm. In terms of biological role, the RuvA-RuvB-RuvC complex processes Holliday junction (HJ) DNA during genetic recombination and DNA repair, while the RuvA-RuvB complex plays an important role in the rescue of blocked DNA replication forks via replication fork reversal (RFR). RuvA specifically binds to HJ cruciform DNA, conferring on it an open structure. The RuvB hexamer acts as an ATP-dependent pump, pulling dsDNA into and through the RuvAB complex. HJ branch migration allows RuvC to scan DNA until it finds its consensus sequence, where it cleaves and resolves the cruciform DNA. This is Holliday junction branch migration complex subunit RuvA from Shewanella sp. (strain MR-7).